The sequence spans 702 residues: Ribosomal RNA large subunit methyltransferase K/L (702 aa).

Residues 43 to 154 (LVYQSLMWSR…KETASIALDL (112 aa)) enclose the THUMP domain.

It belongs to the methyltransferase superfamily. RlmKL family.

The protein localises to the cytoplasm. It catalyses the reaction guanosine(2445) in 23S rRNA + S-adenosyl-L-methionine = N(2)-methylguanosine(2445) in 23S rRNA + S-adenosyl-L-homocysteine + H(+). The catalysed reaction is guanosine(2069) in 23S rRNA + S-adenosyl-L-methionine = N(2)-methylguanosine(2069) in 23S rRNA + S-adenosyl-L-homocysteine + H(+). In terms of biological role, specifically methylates the guanine in position 2445 (m2G2445) and the guanine in position 2069 (m7G2069) of 23S rRNA. The polypeptide is Ribosomal RNA large subunit methyltransferase K/L (Escherichia coli O157:H7).